A 129-amino-acid polypeptide reads, in one-letter code: Glycine cleavage system H protein (129 aa).

In terms of domain architecture, Lipoyl-binding spans 23–105 (SAVVGITEHA…YGEGWLAKFS (83 aa)). Lysine 64 carries the N6-lipoyllysine modification.

Belongs to the GcvH family. In terms of assembly, the glycine cleavage system is composed of four proteins: P, T, L and H. The cofactor is (R)-lipoate.

In terms of biological role, the glycine cleavage system catalyzes the degradation of glycine. The H protein shuttles the methylamine group of glycine from the P protein to the T protein. This chain is Glycine cleavage system H protein, found in Herpetosiphon aurantiacus (strain ATCC 23779 / DSM 785 / 114-95).